A 618-amino-acid chain; its full sequence is UvrABC system protein C (618 aa).

The GIY-YIG domain maps to 13 to 92 (DKPGVYLMKN…IKKYRPKYNI (80 aa)). The UVR domain maps to 204-239 (LDIVENFKLNMEKAAENLEFEKAAMLRDKINIIEKI).

This sequence belongs to the UvrC family. As to quaternary structure, interacts with UvrB in an incision complex.

Its subcellular location is the cytoplasm. Its function is as follows. The UvrABC repair system catalyzes the recognition and processing of DNA lesions. UvrC both incises the 5' and 3' sides of the lesion. The N-terminal half is responsible for the 3' incision and the C-terminal half is responsible for the 5' incision. The chain is UvrABC system protein C from Clostridium botulinum (strain Loch Maree / Type A3).